Consider the following 256-residue polypeptide: Triosephosphate isomerase (256 aa).

9–11 contributes to the substrate binding site; sequence NWK. His-97 serves as the catalytic Electrophile. The Proton acceptor role is filled by Glu-169. Residues Gly-175, Ser-214, and 235 to 236 contribute to the substrate site; that span reads GG.

Belongs to the triosephosphate isomerase family. Homodimer.

It is found in the cytoplasm. It catalyses the reaction D-glyceraldehyde 3-phosphate = dihydroxyacetone phosphate. Its pathway is carbohydrate biosynthesis; gluconeogenesis. It functions in the pathway carbohydrate degradation; glycolysis; D-glyceraldehyde 3-phosphate from glycerone phosphate: step 1/1. Functionally, involved in the gluconeogenesis. Catalyzes stereospecifically the conversion of dihydroxyacetone phosphate (DHAP) to D-glyceraldehyde-3-phosphate (G3P). This Vibrio parahaemolyticus serotype O3:K6 (strain RIMD 2210633) protein is Triosephosphate isomerase.